The primary structure comprises 357 residues: Phosphate acyltransferase (357 aa).

This sequence belongs to the PlsX family. Homodimer. Probably interacts with PlsY.

It localises to the cytoplasm. The catalysed reaction is a fatty acyl-[ACP] + phosphate = an acyl phosphate + holo-[ACP]. It participates in lipid metabolism; phospholipid metabolism. Its function is as follows. Catalyzes the reversible formation of acyl-phosphate (acyl-PO(4)) from acyl-[acyl-carrier-protein] (acyl-ACP). This enzyme utilizes acyl-ACP as fatty acyl donor, but not acyl-CoA. The protein is Phosphate acyltransferase of Roseobacter denitrificans (strain ATCC 33942 / OCh 114) (Erythrobacter sp. (strain OCh 114)).